The primary structure comprises 720 residues: Chloroplastic group IIA intron splicing facilitator CRS1, chloroplastic (720 aa).

A chloroplast-targeting transit peptide spans 1-77 (MRNGINILSY…DQFRENRGVS (77 aa)). Positions 131 to 159 (KAMKKIVRNVEKLDEDSDSEETQMDDLSE) form a coiled coil. CRM domains lie at 205 to 301 (LILD…EGQD) and 359 to 456 (AKLT…EVAD). 2 coiled-coil regions span residues 447–477 (KDFL…TKRE) and 517–553 (RNLE…NMEL). One can recognise a CRM 3 domain in the interval 570–670 (EILTNEEREC…KNYKRPSSKL (101 aa)).

In terms of assembly, homodimer. Interacts with RNA. Part of large ribonucleo-protein complexes that include group IIA introns and CRS1.

Its subcellular location is the plastid. It is found in the chloroplast stroma. Required for the splicing of group IIA introns in chloroplasts, by regulating the intron folding. Forms splicing particles with RNA. May also be involved in chloroplast protein translation. In Arabidopsis thaliana (Mouse-ear cress), this protein is Chloroplastic group IIA intron splicing facilitator CRS1, chloroplastic.